The primary structure comprises 549 residues: Dicarboxylate transporter 2.2, chloroplastic (549 aa).

Residues 1 to 54 (MESLALRSISLSASYLSLHRSSSKSFALLPPSISVHTSPTLRSLSISSPRFTLR) constitute a chloroplast transit peptide. A disordered region spans residues 57–79 (ASSLPEEQNKPQPPPPSPPQPQG). The segment covering 67-77 (PQPPPPSPPQP) has biased composition (pro residues). The next 12 helical transmembrane spans lie at 79 to 99 (GAKL…RFLI), 115 to 135 (IFLF…AWAF), 151 to 171 (TAFA…FFFA), 220 to 240 (AGGV…SYPG), 247 to 267 (LGSF…AILL), 294 to 314 (WFKV…LIIY), 344 to 364 (NEWI…FGEA), 365 to 385 (IGIA…LLGV), 403 to 423 (WFAV…VAWM), 436 to 456 (LTWP…HYLF), 470 to 490 (FLAM…CLAF), and 523 to 543 (VGFV…SFWW).

This sequence belongs to the SLC13A/DASS transporter (TC 2.A.47) family. DIT1 subfamily. Expressed in roots, rosette and cauline leaves, stems, flowers and siliques.

The protein resides in the plastid. The protein localises to the chloroplast inner membrane. May be involved in the transport of dicarboxylate compounds. The chain is Dicarboxylate transporter 2.2, chloroplastic (DIT2-2) from Arabidopsis thaliana (Mouse-ear cress).